Consider the following 279-residue polypeptide: Large ribosomal subunit protein uL2 (279 aa).

Disordered stretches follow at residues 30-59 (EKSLVRPLPKKGGRNNTGRITTRHKGGGHK) and 225-279 (VMNP…KNKR). Residues 50–59 (TTRHKGGGHK) show a composition bias toward basic residues. Over residues 253 to 268 (PEGRTRRPNKESDKLI) the composition is skewed to basic and acidic residues. Over residues 269–279 (VRRRRTGKNKR) the composition is skewed to basic residues.

Belongs to the universal ribosomal protein uL2 family. As to quaternary structure, part of the 50S ribosomal subunit. Forms a bridge to the 30S subunit in the 70S ribosome.

Its function is as follows. One of the primary rRNA binding proteins. Required for association of the 30S and 50S subunits to form the 70S ribosome, for tRNA binding and peptide bond formation. It has been suggested to have peptidyltransferase activity; this is somewhat controversial. Makes several contacts with the 16S rRNA in the 70S ribosome. The protein is Large ribosomal subunit protein uL2 of Kocuria rhizophila (strain ATCC 9341 / DSM 348 / NBRC 103217 / DC2201).